Consider the following 690-residue polypeptide: Glycine--tRNA ligase beta subunit (690 aa).

It belongs to the class-II aminoacyl-tRNA synthetase family. As to quaternary structure, tetramer of two alpha and two beta subunits.

It localises to the cytoplasm. It catalyses the reaction tRNA(Gly) + glycine + ATP = glycyl-tRNA(Gly) + AMP + diphosphate. The sequence is that of Glycine--tRNA ligase beta subunit from Syntrophus aciditrophicus (strain SB).